We begin with the raw amino-acid sequence, 37 residues long: Hemextin A (37 aa).

Heterotetramer composed of two A and two B chains; non-covalently linked. Does not exist as a complex in the crude venom. Post-translationally, may contain several disulfide bonds. In terms of tissue distribution, expressed by the venom gland.

Its subcellular location is the secreted. In terms of biological role, hemextin A (monomer): exhibits mild anticoagulant activity. It specifically inhibits the activation of FX (F10) by the TF-FVIIa complex (extrinsic tenase complex (ETC)) by non-competitively inhibiting the enzymatic activity of FVIIa. Its function is as follows. Hemextin AB complex: specifically inhibits the activation of FX (F10) by the TF-FVIIa complex (extrinsic tenase complex (ETC)) (IC(50)= 100 nM, Ki=25 nM) by non-competitively inhibiting the enzymatic activity of FVIIa. In Hemachatus haemachatus (Rinkhals), this protein is Hemextin A.